We begin with the raw amino-acid sequence, 221 residues long: HTH-type transcriptional regulator McbR (221 aa).

The 68-residue stretch at 10–77 (VSLTLQVEND…PAQAFTVPEV (68 aa)) folds into the HTH gntR-type domain. The H-T-H motif DNA-binding region spans 37-56 (TKNLAEQLGMSITPVREALL).

Functionally, important for biofilm formation. Represses expression of McbA by binding to its promoter region, which prevents colanic acid overproduction and mucoidy. This Escherichia coli (strain K12) protein is HTH-type transcriptional regulator McbR (mcbR).